Reading from the N-terminus, the 168-residue chain is Small ribosomal subunit protein bS16 (168 aa).

Positions 110–168 are disordered; sequence LSEANNGPTAEAITEKKKKAREEKEAKEAAEKAAAEKAAAAEAEASEEAPAEEAASEEA. A compositionally biased stretch (basic and acidic residues) spans 129 to 144; sequence AREEKEAKEAAEKAAA. A compositionally biased stretch (acidic residues) spans 153–168; it reads EASEEAPAEEAASEEA.

Belongs to the bacterial ribosomal protein bS16 family.

This chain is Small ribosomal subunit protein bS16, found in Corynebacterium efficiens (strain DSM 44549 / YS-314 / AJ 12310 / JCM 11189 / NBRC 100395).